The sequence spans 629 residues: tRNA uridine 5-carboxymethylaminomethyl modification enzyme MnmG (629 aa).

FAD is bound by residues 13-18, Val125, and Ser180; that span reads GGGHAG. 273 to 287 contacts NAD(+); that stretch reads GPRYCPSIEDKVMRF. Gln370 contacts FAD.

Belongs to the MnmG family. In terms of assembly, homodimer. Heterotetramer of two MnmE and two MnmG subunits. FAD serves as cofactor.

The protein resides in the cytoplasm. In terms of biological role, NAD-binding protein involved in the addition of a carboxymethylaminomethyl (cmnm) group at the wobble position (U34) of certain tRNAs, forming tRNA-cmnm(5)s(2)U34. The chain is tRNA uridine 5-carboxymethylaminomethyl modification enzyme MnmG from Sodalis glossinidius (strain morsitans).